Consider the following 273-residue polypeptide: Shikimate dehydrogenase (NADP(+)) (273 aa).

Shikimate-binding positions include 15–17 (SKS) and Thr62. The active-site Proton acceptor is the Lys66. Glu78 contributes to the NADP(+) binding site. Shikimate is bound by residues Asn87 and Asp103. Residues 127–131 (GAGGA), 151–156 (NRTHDK), and Met214 each bind NADP(+). Position 216 (Tyr216) interacts with shikimate. Gly238 is a binding site for NADP(+).

Belongs to the shikimate dehydrogenase family. In terms of assembly, homodimer.

It catalyses the reaction shikimate + NADP(+) = 3-dehydroshikimate + NADPH + H(+). The protein operates within metabolic intermediate biosynthesis; chorismate biosynthesis; chorismate from D-erythrose 4-phosphate and phosphoenolpyruvate: step 4/7. Involved in the biosynthesis of the chorismate, which leads to the biosynthesis of aromatic amino acids. Catalyzes the reversible NADPH linked reduction of 3-dehydroshikimate (DHSA) to yield shikimate (SA). The protein is Shikimate dehydrogenase (NADP(+)) of Shewanella denitrificans (strain OS217 / ATCC BAA-1090 / DSM 15013).